The following is a 5654-amino-acid chain: MSVGRRKLALLWALALALACTRHTGHAQDGSSESSYKHHPALSPIARGPSGVPLRGATVFPSLRTIPVVRASNPAHNGRVCSTWGSFHYKTFDGDVFRFPGLCNYVFSEHCGAAYEDFNIQLRRSQESAAPTLSRVLMKVDGVVIQLTKGSVLVNGHPVLLPFSQSGVLIQQSSSYTKVEARLGLVLMWNHDDSLLLELDTKYANKTCGLCGDFNGMPVVSELLSHNTKLTPMEFGNLQKMDDPTDQCQDPVPEPPRNCSTGFGICEELLHGQLFSGCVALVDVGSYLEACRQDLCFCEDTDLLSCVCHTLAEYSRQCTHAGGLPQDWRGPDFCPQKCPNNMQYHECRSPCADTCSNQEHSRACEDHCVAGCFCPEGTVLDDIGQTGCVPVSKCACVYNGAAYAPGATYSTDCTNCTCSGGRWSCQEVPCPGTCSVLGGAHFSTFDGKQYTVHGDCSYVLTKPCDSSAFTVLAELRRCGLTDSETCLKSVTLSLDGAQTVVVIKASGEVFLNQIYTQLPISAANVTIFRPSTFFIIAQTSLGLQLNLQLVPTMQLFMQLAPKLRGQTCGLCGNFNSIQADDFRTLSGVVEATAAAFFNTFKTQAACPNIRNSFEDPCSLSVENEKYAQHWCSQLTDADGPFGRCHAAVKPGTYYSNCMFDTCNCERSEDCLCAALSSYVHACAAKGVQLGGWRDGVCTKPMTTCPKSMTYHYHVSTCQPTCRSLSEGDITCSVGFIPVDGCICPKGTFLDDTGKCVQASNCPCYHRGSMIPNGESVHDSGAICTCTHGKLSCIGGQAPAPVCAAPMVFFDCRNATPGDTGAGCQKSCHTLDMTCYSPQCVPGCVCPDGLVADGEGGCITAEDCPCVHNEASYRAGQTIRVGCNTCTCDSRMWRCTDDPCLATCAVYGDGHYLTFDGQSYSFNGDCEYTLVQNHCGGKDSTQDSFRVVTENVPCGTTGTTCSKAIKIFLGGFELKLSHGKVEVIGTDESQEVPYTIRQMGIYLVVDTDIGLVLLWDKKTSIFINLSPEFKGRVCGLCGNFDDIAVNDFATRSRSVVGDVLEFGNSWKLSPSCPDALAPKDPCTANPFRKSWAQKQCSILHGPTFAACHAHVEPARYYEACVNDACACDSGGDCECFCTAVAAYAQACHEVGLCVSWRTPSICPLFCDYYNPEGQCEWHYQPCGVPCLRTCRNPRGDCLRDVRGLEGCYPKCPPEAPIFDEDKMQCVATCPTPPLPPRCHVHGKSYRPGAVVPSDKNCQSCLCTERGVECTYKAEACVCTYNGQRFHPGDVIYHTTDGTGGCISARCGANGTIERRVYPCSPTTPVPPTTFSFSTPPLVVSSTHTPSNGPSSAHTGPPSSAWPTTAGTSPRTRLPTASASLPPVCGEKCLWSPWMDVSRPGRGTDSGDFDTLENLRAHGYRVCESPRSVECRAEDAPGVPLRALGQRVQCSPDVGLTCRNREQASGLCYNYQIRVQCCTPLPCSTSSSPAQTTPPTTSKTTETRASGSSAPSSTPGTVSLSTARTTPAPGTATSVKKTFSTPSPPPVPATSTSSMSTTAPGTSVVSSKPTPTEPSTSSCLQELCTWTEWIDGSYPAPGINGGDFDTFQNLRDEGYTFCESPRSVQCRAESFPNTPLADLGQDVICSHTEGLICLNKNQLPPICYNYEIRIQCCETVNVCRDITRLPKTVATTRPTPHPTGAQTQTTFTTHMPSASTEQPTATSRGGPTATSVTQGTHTTLVTRNCHPRCTWTKWFDVDFPSPGPHGGDKETYNNIIRSGEKICRRPEEITRLQCRAKSHPEVSIEHLGQVVQCSREEGLVCRNQDQQGPFKMCLNYEVRVLCCETPRGCHMTSTPGSTSSSPAQTTPSTTSKTTETQASGSSAPSSTPGTVSLSTARTTPAPGTATSVKKTFSTPSPPPVPATSTSSMSTTAPGTSVVSSKPTPTEPSTSSCLQELCTWTEWIDGSYPAPGINGGDFDTFQNLRDEGYTFCESPRSVQCRAESFPNTPLADLGQDVICSHTEGLICLNKNQLPPICYNYEIRIQCCETVNVCRDITRPPKTVATTRPTPHPTGAQTQTTFTTHMPSASTEQPTATSRGGPTATSVTQGTHTTPVTRNCHPRCTWTTWFDVDFPSPGPHGGDKETYNNIIRSGEKICRRPEEITRLQCRAKSHPEVSIEHLGQVVQCSREEGLVCRNQDQQGPFKMCLNYEVRVLCCETPKGCPVTSTPVTAPSTPSGRATSPTQSTSSWQKSRTTTLVTTSTTSTPQTSTTYAHTTSTTSAPTARTTSAPTTRTTSASPASTTSGPGNTPSPVPTTSTISAPTTSITSAPTTSTTSAPTSSTTSGPGTTPSPVPTTSITSAPTTSTTSAPTTSTTSARTSSTTSATTTSRISGPETTPSPVPTTSTTSATTTSTTSAPTTSTTSAPTSSTTSSPQTSTTSAPTTSTTSGPGTTPSPVPTTSTTSAPTTRTTSAPKSSTTSAATTSTTSGPETTPRPVPTTSTTSSPTTSTTSAPTTSTTSASTTSTTSGAGTTPSPVPTTSTTSAPTTSTTSAPISSTTSATTTSTTSGPGTTPSPVPTTSTTSAPTTSTTSGPGTTPSAVPTTSITSAPTTSTNSAPISSTTSATTTSRISGPETTPSPVPTASTTSASTTSTTSGPGTTPSPVPTTSTISVPTTSTTSASTTSTTSASTTSTTSGPGTTPSPVPTTSTTSAPTTSTTSAPTTSTISAPTTSTTSATTTSTTSAPTPRRTSAPTTSTISASTTSTTSATTTSTTSATTTSTISAPTTSTTLSPTTSTTSTTITSTTSAPISSTTSTPQTSTTSAPTTSTTSGPGTTSSPVPTTSTTSAPTTSTTSAPTTRTTSVPTSSTTSTATTSTTSGPGTTPSPVPTTSTTSAPTTRTTSAPTTSTTSAPTTSTTSAPTSSTTSATTTSTISVPTTSTTSVPGTTPSPVPTTSTISVPTTSTTSASTTSTTSGPGTTPSPVPTTSTTSAPTTSTTSAPTTSTISAPTTSTPSAPTTSTTLAPTTSTTSAPTTSTTSTPTSSTTSSPQTSTTSASTTSITSGPGTTPSPVPTTSTTSAPTTSTTSAATTSTISAPTTSTTSAPTTSTTSASTASKTSGLGTTPSPIPTTSTTSPPTTSTTSASTASKTSGPGTTPSPVPTTSTIFAPRTSTTSASTTSTTPGPGTTPSPVPTTSTASVSKTSTSHVSISKTTHSQPVTRDCHLRCTWTKWFDIDFPSPGPHGGDKETYNNIIRSGEKICRRPEEITRLQCRAESHPEVSIEHLGQVVQCSREEGLVCRNQDQQGPFKMCLNYEVRVLCCETPKGCPVTSTPVTAPSTPSGRATSPTQSTSSWQKSRTTTLVTTSTTSTPQTSTTSAPTTSTTSAPTTSTTSAPTTSTTSTPQTSISSAPTSSTTSAPTSSTISARTTSIISAPTTSTTSSPTTSTTSATTTSTTSAPTSSTTSTPQTSKTSAATSSTTSGSGTTPSPVTTTSTASVSKTSTSHVSVSKTTHSQPVTRDCHPRCTWTKWFDVDFPSPGPHGGDKETYNNIIRSGEKICRRPEEITRLQCRAKSHPEVSIEHLGQVVQCSREEGLVCRNQDQQGPFKMCLNYEVRVLCCETPKGCPVTSTSVTAPSTPSGRATSPTQSTSSWQKSRTTTLVTSSITSTTQTSTTSAPTTSTTPASIPSTTSAPTTSTTSAPTTSTTSAPTTSTTSTPQTTTSSAPTSSTTSAPTTSTISAPTTSTISAPTTSTTSAPTASTTSAPTSTSSAPTTNTTSAPTTSTTSAPITSTISAPTTSTTSTPQTSTISSPTTSTTSTPQTSTTSSPTTSTTSAPTTSTTSAPTTSTTSTPQTSISSAPTSSTTSAPTASTISAPTTSTTSFHTTSTTSPPTSSTSSTPQTSKTSAATSSTTSGSGTTPSPVPTTSTASVSKTSTSHVSVSKTTHSQPVTRDCHPRCTWTKWFDVDFPSPGPHGGDKETYNNIIRSGEKICRRPEEITRLQCRAESHPEVSIEHLGQVVQCSREEGLVCRNQDQQGPFKMCLNYEVRVLCCETPKGCPVTSTPVTAPSTPSGRATSPTQSTSSWQKSRTTTLVTTSTTSTPQTSTTSAPTTSTIPASTPSTTSAPTTSTTSAPTTSTTSAPTHRTTSGPTTSTTLAPTTSTTSAPTTSTNSAPTTSTISASTTSTISAPTTSTISSPTSSTTSTPQTSKTSAATSSTTSGSGTTPSPVPTTSTTSASTTSTTSAPTTSTTSGPGTTPSPVPSTSTTSAATTSTTSAPTTRTTSAPTSSMTSGPGTTPSPVPTTSTTSAPTTSTTSGPGTTPSPVPTTSTTSAPITSTTSGPGSTPSPVPTTSTTSAPTTSTTSASTASTTSGPGTTPSPVPTTSTTSAPTTRTTSASTASTTSGPGSTPSPVPTTSTTSAPTTRTTPASTASTTSGPGTTPSPVPTTSTTSASTTSTISLPTTSTTSAPITSMTSGPGTTPSPVPTTSTTSAPTTSTTSASTASTTSGPGTTPSPVPTTSTTSAPTTSTTSASTASTTSGPGTSLSPVPTTSTTSAPTTSTTSGPGTTPSPVPTTSTTSAPTTSTTSGPGTTPSPVPTTSTTPVSKTSTSHLSVSKTTHSQPVTSDCHPLCAWTKWFDVDFPSPGPHGGDKETYNNIIRSGEKICRRPEEITRLQCRAESHPEVNIEHLGQVVQCSREEGLVCRNQDQQGPFKMCLNYEVRVLCCETPRGCPVTSVTPYGTSPTNALYPSLSTSMVSASVASTSVASSSVASSSVAYSTQTCFCNVADRLYPAGSTIYRHRDLAGHCYYALCSQDCQVVRGVDSDCPSTTLPPAPATSPSISTSEPVTELGCPNAVPPRKKGETWATPNCSEATCEGNNVISLRPRTCPRVEKPTCANGYPAVKVADQDGCCHHYQCQCVCSGWGDPHYITFDGTYYTFLDNCTYVLVQQIVPVYGHFRVLVDNYFCGAEDGLSCPRSIILEYHQDRVVLTRKPVHGVMTNEIIFNNKVVSPGFRKNGIVVSRIGVKMYATIPELGVQVMFSGLIFSVEVPFSKFANNTEGQCGTCTNDRKDECRTPRGTVVASCSEMSGLWNVSIPDQPACHRPHPTPTTVGPTTVGSTTVGPTTVGSTTVGPTTPPAPCLPSPICQLILSKVFEPCHTVIPPLLFYEGCVFDRCHMTDLDVVCSSLELYAALCASHDICIDWRGRTGHMCPFTCPADKVYQPCGPSNPSYCYGNDSASLGALPEAGPITEGCFCPEGMTLFSTSAQVCVPTGCPRCLGPHGEPVKVGHTVGMDCQECTCEAATWTLTCRPKLCPLPPACPLPGFVPVPAAPQAGQCCPQYSCACNTSRCPAPVGCPEGARAIPTYQEGACCPVQNCSWTVCSINGTLYQPGAVVSSSLCETCRCELPGGPPSDAFVVSCETQICNTHCPVGFEYQEQSGQCCGTCVQVACVTNTSKSPAHLFYPGETWSDAGNHCVTHQCEKHQDGLVVVTTKKACPPLSCSLDEARMSKDGCCRFCPPPPPPYQNQSTCAVYHRSLIIQQQGCSSSEPVRLAYCRGNCGDSSSMYSLEGNTVEHRCQCCQELRTSLRNVTLHCTDGSSRAFSYTEVEECGCMGRRCPAPGDTQHSEEAEPEPSQEAESGSWERGVPVSPMH.

A signal peptide spans 1–27; that stretch reads MSVGRRKLALLWALALALACTRHTGHA. Residues 27-49 are disordered; the sequence is AQDGSSESSYKHHPALSPIARGP. Positions 79 to 249 constitute a VWFD 1 domain; the sequence is RVCSTWGSFH…KMDDPTDQCQ (171 aa). Cystine bridges form between C81–C211 and C103–C248. Residue E198 coordinates Cu(2+). N-linked (GlcNAc...) asparagine glycans are attached at residues N205 and N258. The Cu(2+) site is built by H320 and H367. Positions 338–394 constitute a TIL 1 domain; that stretch reads CPNNMQYHECRSPCADTCSNQEHSRACEDHCVAGCFCPEGTVLDDIGQTGCVPVSKC. Residues 394–465 form the VWFC 1 domain; sequence CACVYNGAAY…CSYVLTKPCD (72 aa). Residue N415 is glycosylated (N-linked (GlcNAc...) asparagine). The region spanning 432–607 is the VWFD 2 domain; that stretch reads GTCSVLGGAH…NTFKTQAACP (176 aa). 3 disulfides stabilise this stretch: C434–C571, C456–C606, and C478–C486. N524 is a glycosylation site (N-linked (GlcNAc...) asparagine). TIL domains lie at 704–761 and 818–863; these read CPKS…ASNC and DTGA…AEDC. One can recognise a VWFD 3 domain in the interval 901–1072; the sequence is ATCAVYGDGH…NSWKLSPSCP (172 aa). 4 cysteine pairs are disulfide-bonded: C903-C1036, C925-C1071, C934-C1033, and C953-C960. N-linked (GlcNAc...) asparagine glycosylation is present at N1308. A disordered region spans residues 1336–1377; the sequence is LVVSSTHTPSNGPSSAHTGPPSSAWPTTAGTSPRTRLPTASA. Over residues 1338–1377 the composition is skewed to polar residues; that stretch reads VSSTHTPSNGPSSAHTGPPSSAWPTTAGTSPRTRLPTASA. Residues 1383-1481 form a Cys-rich subdomain 1 repeat; it reads CGEKCLWSPW…RVQCCTPLPC (99 aa). The 9 X Cys-rich subdomain repeats stretch occupies residues 1383-4731; the sequence is CGEKCLWSPW…VLCCETPRGC (3349 aa). The C-linked (Man) tryptophan glycan is linked to W1389. Composition is skewed to low complexity over residues 1483-1539 and 1547-1575; these read TSSS…TFST and ATST…PSTS. The interval 1483–1575 is disordered; the sequence is TSSSPAQTTP…KPTPTEPSTS (93 aa). Residues 1577 to 1677 form a Cys-rich subdomain 2 repeat; it reads CLQELCTWTE…IQCCETVNVC (101 aa). The C-linked (Man) tryptophan glycan is linked to W1584. Residues 1688–1733 form a disordered region; sequence ATTRPTPHPTGAQTQTTFTTHMPSASTEQPTATSRGGPTATSVTQG. Residues 1697–1707 are compositionally biased toward low complexity; sequence TGAQTQTTFTT. Residues 1708 to 1733 are compositionally biased toward polar residues; the sequence is HMPSASTEQPTATSRGGPTATSVTQG. One copy of the Cys-rich subdomain 3 repeat lies at 1743 to 1847; sequence CHPRCTWTKW…VLCCETPRGC (105 aa). W1749 is a glycosylation site (C-linked (Man) tryptophan). The tract at residues 1849–1948 is disordered; that stretch reads MTSTPGSTSS…KPTPTEPSTS (100 aa). 2 stretches are compositionally biased toward low complexity: residues 1850 to 1912 and 1920 to 1948; these read TSTP…TFST and ATST…PSTS. Residues 1950 to 2050 form a Cys-rich subdomain 4 repeat; the sequence is CLQELCTWTE…IQCCETVNVC (101 aa). W1957 is a glycosylation site (C-linked (Man) tryptophan). A disordered region spans residues 2059–2110; sequence TVATTRPTPHPTGAQTQTTFTTHMPSASTEQPTATSRGGPTATSVTQGTHTT. Over residues 2070–2080 the composition is skewed to low complexity; the sequence is TGAQTQTTFTT. Polar residues predominate over residues 2081–2110; the sequence is HMPSASTEQPTATSRGGPTATSVTQGTHTT. Residues 2116 to 2220 form a Cys-rich subdomain 5 repeat; the sequence is CHPRCTWTTW…VLCCETPKGC (105 aa). W2122 carries a C-linked (Man) tryptophan glycan. Positions 2224–2234 are enriched in low complexity; the sequence is STPVTAPSTPS. Residues 2224–3214 are disordered; sequence STPVTAPSTP…SHVSISKTTH (991 aa). The segment covering 2235–2249 has biased composition (polar residues); sequence GRATSPTQSTSSWQK. Low complexity-rich tracts occupy residues 2250 to 3184 and 3192 to 3214; these read SRTT…TPGP and PTTS…KTTH. Residues 2257–3200 are 107 X 8 AA approximate tandem repeats of T-T-S-T-T-S-A-P; the sequence is TTSTTSTPQT…VPTTSTASVS (944 aa). Residues T2395, T2405, T2451, T2461, T2531, T2541, T2571, T2581, T2699, T2709, T2883, T2893, T2979, T2989, T3067, and T3077 are each glycosylated (O-linked (GalNAc) threonine). The stretch at 3222–3326 is one Cys-rich subdomain 6 repeat; that stretch reads CHLRCTWTKW…VLCCETPKGC (105 aa). Residue W3228 is glycosylated (C-linked (Man) tryptophan). Positions 3329-3340 are enriched in low complexity; sequence TSTPVTAPSTPS. Positions 3329–3515 are disordered; the sequence is TSTPVTAPST…SVSKTTHSQP (187 aa). Residues 3341-3355 are compositionally biased toward polar residues; the sequence is GRATSPTQSTSSWQK. Over residues 3356–3513 the composition is skewed to low complexity; the sequence is SRTTTLVTTS…HVSVSKTTHS (158 aa). Positions 3363–3498 are 17 X 8 AA approximate tandem repeats of T-T-S-T-T-S-A-P; that stretch reads TTSTTSTPQT…VTTTSTASVS (136 aa). The Cys-rich subdomain 7 repeat unit spans residues 3520-3660; it reads CHPRCTWTKW…WQKSRTTTLV (141 aa). W3526 carries C-linked (Man) tryptophan glycosylation. Low complexity predominate over residues 3628-3638; the sequence is STSVTAPSTPS. The disordered stretch occupies residues 3628-3951; the sequence is STSVTAPSTP…KTTHSQPVTR (324 aa). The segment covering 3639-3660 has biased composition (polar residues); that stretch reads GRATSPTQSTSSWQKSRTTTLV. The tract at residues 3661–3931 is 34 X 8 AA approximate tandem repeats of T-T-S-T-T-S-A-P; the sequence is TSSITSTTQT…VPTTSTASVS (271 aa). Positions 3661–3946 are enriched in low complexity; it reads TSSITSTTQT…HVSVSKTTHS (286 aa). Residue N3774 is glycosylated (N-linked (GlcNAc...) asparagine). A Cys-rich subdomain 8 repeat occupies 3953 to 4057; the sequence is CHPRCTWTKW…VLCCETPKGC (105 aa). C-linked (Man) tryptophan glycosylation is present at W3959. The segment covering 4060 to 4071 has biased composition (low complexity); sequence TSTPVTAPSTPS. The interval 4060–4625 is disordered; the sequence is TSTPVTAPST…KTTHSQPVTS (566 aa). The span at 4072–4088 shows a compositional bias: polar residues; it reads GRATSPTQSTSSWQKSR. Residues 4089–4610 show a composition bias toward low complexity; that stretch reads TTTLVTTSTT…TTPVSKTSTS (522 aa). The tract at residues 4093–4595 is 58 X 8 AA approximate tandem repeats of T-T-S-T-T-S-A-P; sequence VTTSTTSTPQ…TSGPGTTPSP (503 aa). Residues T4224, T4234, T4296, T4306, T4320, T4330, T4376, T4386, T4440, T4450, T4480, T4490, T4512, T4522, T4568, and T4578 are each glycosylated (O-linked (GalNAc) threonine). Over residues 4611–4624 the composition is skewed to polar residues; it reads HLSVSKTTHSQPVT. One copy of the Cys-rich subdomain 9 repeat lies at 4627 to 4731; it reads CHPLCAWTKW…VLCCETPRGC (105 aa). Residue W4633 is glycosylated (C-linked (Man) tryptophan). A disordered region spans residues 4830–4849; it reads TLPPAPATSPSISTSEPVTE. Positions 4852-4918 constitute a VWFC 2 domain; the sequence is CPNAVPPRKK…DGCCHHYQCQ (67 aa). N-linked (GlcNAc...) asparagine glycosylation is found at N4869 and N4942. The VWFD 4 domain maps to 4919-5103; that stretch reads CVCSGWGDPH…VSIPDQPACH (185 aa). 3 disulfide bridges follow: C4921/C5063, C4943/C5102, and C4967/C4975. Residues N5057, N5093, and N5236 are each glycosylated (N-linked (GlcNAc...) asparagine). A VWFC 3 domain is found at 5276–5345; sequence PRCLGPHGEP…GQCCPQYSCA (70 aa). N-linked (GlcNAc...) asparagine glycans are attached at residues N5347, N5377, N5386, N5455, and N5528. The 68-residue stretch at 5381 to 5448 folds into the VWFC 4 domain; the sequence is TVCSINGTLY…QSGQCCGTCV (68 aa). Disulfide bonds link C5532/C5582, C5546/C5596, C5557/C5612, and C5561/C5614. Residues 5532-5620 form the CTCK domain; sequence CAVYHRSLII…ECGCMGRRCP (89 aa). A glycan (N-linked (GlcNAc...) asparagine) is linked at N5591. Residues 5622 to 5654 are disordered; it reads PGDTQHSEEAEPEPSQEAESGSWERGVPVSPMH.

In terms of assembly, homomultimer; disulfide-linked. The N- and C-terminus mediate their assembly into higher order structures to form filaments. The CTCK domains of two polypeptides associate in the endoplasmic reticulum to generate intermolecularly disulfide-bonded dimers. These dimers progress to the Golgi apparatus, which is a more acidic environment than the endoplasmic reticulum. Under acidic conditions, the N-termini form non-covalent intermolecular interactions that juxtapose assemblies from different CTCK-linked dimers to produce long, disulfide-linked polymers that remain highly compact until secretion. C-, O- and N-glycosylated. O-glycosylated on the second and last Thr of the Thr-/Ser-rich tandem repeats TTPSPVPTTSTTSA. One form of glycosylation is also known as Lewis B (LeB) blood group antigen, a tetrasaccharide consisting of N-acetylglucosamine having a fucosyl residue attached. It has a role as an epitope and antigen and functions as a receptor for H.pylori binding and facilitates infection. C-mannosylation in the Cys-rich subdomains may be required for proper folding of these regions and for export from the endoplasmic reticulum during biosynthesis. Post-translationally, proteolytic cleavage in the C-terminal is initiated early in the secretory pathway and does not involve a serine protease. The extent of cleavage is increased in the acidic parts of the secretory pathway. Cleavage generates a reactive group which could link the protein to a primary amide. As to expression, highly expressed in surface mucosal cells of respiratory tract and stomach epithelia. Overexpressed in a number of carcinomas. Also expressed in Barrett's esophagus epithelium and in the proximal duodenum.

Its subcellular location is the secreted. Functionally, gel-forming glycoprotein of gastric and respiratory tract epithelia that protects the mucosa from infection and chemical damage by binding to inhaled microorganisms and particles that are subsequently removed by the mucociliary system. Interacts with H.pylori in the gastric epithelium, Barrett's esophagus as well as in gastric metaplasia of the duodenum (GMD). In Homo sapiens (Human), this protein is Mucin-5AC.